Here is a 409-residue protein sequence, read N- to C-terminus: bZIP transcription factor 16 (409 aa).

Positions 1 to 16 are enriched in basic and acidic residues; that stretch reads MASNEMEKSSKEKEPK. 4 disordered regions span residues 1–63, 118–236, 274–327, and 362–409; these read MASN…VASS, NGMT…LPVS, MHGK…LRKQ, and TTEN…KDST. The span at 24–34 shows a compositional bias: low complexity; that stretch reads APPSSQEPSSA. Residues 133–145 are compositionally biased toward basic and acidic residues; sequence GDAKQSEVKEKLP. Positions 152-178 are enriched in polar residues; that stretch reads SLGSLNMITGKNNEPGKNSGASANGAY. Low complexity predominate over residues 179–203; sequence SKSGESASDGSSEGSDGNSQNDSGS. Positions 216-228 are enriched in polar residues; it reads NGGSANGPQNGSA. Residues 305–368 enclose the bZIP domain; the sequence is ELKRQRRKQS…EELTTENTSL (64 aa). The Bipartite nuclear localization signal motif lies at 307–323; it reads KRQRRKQSNRESARRSR. The basic motif stretch occupies residues 307–326; it reads KRQRRKQSNRESARRSRLRK. The segment covering 314–327 has biased composition (basic and acidic residues); sequence SNRESARRSRLRKQ. Positions 333-368 are leucine-zipper; it reads LAQRAEVLNEENTNLRAEINKLKSQCEELTTENTSL. The segment covering 398-409 has biased composition (basic and acidic residues); sequence AERKVDSYKDST.

It belongs to the bZIP family. In terms of assembly, monomer, homodimer and heterodimers with BZIP68 and GBF1/BZIP41. Heterodimers with GBF2/BZIP54 and GBF3/BZIP55. Binds DNA as monomer and forms homo- and heterodimers. The monomeric form is redox regulated. Interacts with GIP1.

It localises to the nucleus. Its function is as follows. Transcriptional activator that binds to the G-box motif (5'-CACGTG-3') and other cis-acting elements with 5'-ACGT-3' core, such as Hex, C-box and as-1 motifs. Possesses high binding affinity to G-box, much lower affinity to Hex and C-box, and little affinity to as-1 element. G-box and G-box-like motifs are cis-acting elements defined in promoters of certain plant genes which are regulated by such diverse stimuli as light-induction or hormone control. Binds to the G-box motif 5'-CACGTG-3' of LHCB2.4 (At3g27690) promoter. May act as transcriptional repressor in light-regulated expression of LHCB2.4. Binds DNA as monomer. DNA-binding activity is redox-dependent. The polypeptide is bZIP transcription factor 16 (Arabidopsis thaliana (Mouse-ear cress)).